Here is a 93-residue protein sequence, read N- to C-terminus: Integration host factor subunit beta (93 aa).

This sequence belongs to the bacterial histone-like protein family. Heterodimer of an alpha and a beta chain.

This protein is one of the two subunits of integration host factor, a specific DNA-binding protein that functions in genetic recombination as well as in transcriptional and translational control. The chain is Integration host factor subunit beta from Aliivibrio fischeri (strain ATCC 700601 / ES114) (Vibrio fischeri).